The chain runs to 434 residues: Alpha-enolase (434 aa).

Position 2 is an N-acetylserine (Ser-2). An N6-acetyllysine modification is found at Lys-5. Ser-40 contacts Mg(2+). Phosphotyrosine is present on Tyr-44. Residue Lys-60 is modified to N6-acetyllysine; alternate. The residue at position 60 (Lys-60) is an N6-succinyllysine; alternate. Lys-64 and Lys-71 each carry N6-acetyllysine. An N6-acetyllysine; alternate modification is found at Lys-89. At Lys-89 the chain carries N6-succinyllysine; alternate. Position 126 is an N6-acetyllysine (Lys-126). Substrate-binding residues include His-158 and Glu-167. N6-acetyllysine is present on residues Lys-193 and Lys-199. Lys-202 is subject to N6-acetyllysine; alternate. Residue Lys-202 forms a Glycyl lysine isopeptide (Lys-Gly) (interchain with G-Cter in SUMO2); alternate linkage. Glu-210 serves as the catalytic Proton donor. 2 positions are modified to N6-acetyllysine; alternate: Lys-228 and Lys-233. Lys-228 carries the N6-succinyllysine; alternate modification. Lys-228 is subject to N6-(2-hydroxyisobutyryl)lysine; alternate. Lys-233 is subject to N6-malonyllysine; alternate. Position 245 (Asp-245) interacts with Mg(2+). N6-acetyllysine is present on Lys-256. Phosphoserine is present on Ser-263. Position 281 is an N6-acetyllysine; alternate (Lys-281). The residue at position 281 (Lys-281) is an N6-(2-hydroxyisobutyryl)lysine; alternate. Lys-285 is modified (N6-acetyllysine). Tyr-287 bears the Phosphotyrosine mark. Ser-291 bears the Phosphoserine mark. Residues Glu-293 and Asp-318 each coordinate Mg(2+). 2 residues coordinate substrate: Glu-293 and Asp-318. An N6-acetyllysine mark is found at Lys-335 and Lys-343. Catalysis depends on Lys-343, which acts as the Proton acceptor. Substrate contacts are provided by residues 370–373 and Lys-394; that span reads SHRS. The segment at 405-434 is required for interaction with PLG; sequence AKYNQILRIEEELGSKAKFAGRSFRNPLAK. Residue Lys-406 is modified to N6-acetyllysine. Residue Lys-420 is modified to N6-acetyllysine; alternate. Lys-420 carries the N6-succinyllysine; alternate modification. Lys-420 is subject to N6-malonyllysine; alternate.

It belongs to the enolase family. As to quaternary structure, mammalian enolase is composed of 3 isozyme subunits, alpha, beta and gamma, which can form homodimers or heterodimers which are cell-type and development-specific. ENO1 interacts with PLG in the neuronal plasma membrane and promotes its activation. The C-terminal lysine is required for this binding. Interacts with ENO4 and PGAM2. Interacts with CMTM6. The cofactor is Mg(2+). ISGylated. In terms of processing, lysine 2-hydroxyisobutyrylation (Khib) by p300/EP300 activates the phosphopyruvate hydratase activity. Expressed in flagella of epididymal sperm. The alpha/alpha homodimer is expressed in embryo and in most adult tissues. The alpha/beta heterodimer and the beta/beta homodimer are found in striated muscle, and the alpha/gamma heterodimer and the gamma/gamma homodimer in neurons.

The protein resides in the cytoplasm. The protein localises to the cell membrane. It carries out the reaction (2R)-2-phosphoglycerate = phosphoenolpyruvate + H2O. The protein operates within carbohydrate degradation; glycolysis; pyruvate from D-glyceraldehyde 3-phosphate: step 4/5. Glycolytic enzyme that catalyzes the conversion of 2-phosphoglycerate to phosphoenolpyruvate. In addition to glycolysis, involved in various processes such as growth control, hypoxia tolerance and allergic responses. May also function in the intravascular and pericellular fibrinolytic system due to its ability to serve as a receptor and activator of plasminogen on the cell surface of several cell-types such as leukocytes and neurons. Stimulates immunoglobulin production. The polypeptide is Alpha-enolase (Eno1) (Rattus norvegicus (Rat)).